The chain runs to 289 residues: Glucosamine-6-phosphate deaminase 1 (289 aa).

Lys-64 is modified (N6-acetyllysine). Catalysis depends on Asp-72, which acts as the Proton acceptor; for enolization step. The active-site For ring-opening step is the Asp-141. His-143 acts as the Proton acceptor; for ring-opening step in catalysis. Glu-148 functions as the For ring-opening step in the catalytic mechanism. At Thr-161 the chain carries Phosphothreonine.

This sequence belongs to the glucosamine/galactosamine-6-phosphate isomerase family. In terms of assembly, homohexamer.

Its subcellular location is the cytoplasm. It catalyses the reaction alpha-D-glucosamine 6-phosphate + H2O = beta-D-fructose 6-phosphate + NH4(+). It functions in the pathway nucleotide-sugar biosynthesis; UDP-N-acetyl-alpha-D-glucosamine biosynthesis; alpha-D-glucosamine 6-phosphate from D-fructose 6-phosphate: step 1/1. Its activity is regulated as follows. Allosterically activated by N-acetylglucosamine-6-phosphate (GlcNAc6P). Its function is as follows. Catalyzes the reversible conversion of alpha-D-glucosamine 6-phosphate (GlcN-6P) into beta-D-fructose 6-phosphate (Fru-6P) and ammonium ion, a regulatory reaction step in de novo uridine diphosphate-N-acetyl-alpha-D-glucosamine (UDP-GlcNAc) biosynthesis via hexosamine pathway. Deamination is coupled to aldo-keto isomerization mediating the metabolic flux from UDP-GlcNAc toward Fru-6P. At high ammonium level can drive amination and isomerization of Fru-6P toward hexosamines and UDP-GlcNAc synthesis. Has a role in fine tuning the metabolic fluctuations of cytosolic UDP-GlcNAc and their effects on hyaluronan synthesis that occur during tissue remodeling. Seems to trigger calcium oscillations in mammalian eggs. These oscillations serve as the essential trigger for egg activation and early development of the embryo. The chain is Glucosamine-6-phosphate deaminase 1 from Bos taurus (Bovine).